The chain runs to 397 residues: Putative serine/threonine-protein kinase R301 (397 aa).

The 373-residue stretch at 25-397 (QIKSTSVGSG…IIRHFNSPRL (373 aa)) folds into the Protein kinase domain. ATP contacts are provided by residues 31–39 (VGSGGSDNI) and Lys53. Asp218 serves as the catalytic Proton acceptor.

Belongs to the protein kinase superfamily. Ser/Thr protein kinase family.

Its subcellular location is the virion. The catalysed reaction is L-seryl-[protein] + ATP = O-phospho-L-seryl-[protein] + ADP + H(+). It catalyses the reaction L-threonyl-[protein] + ATP = O-phospho-L-threonyl-[protein] + ADP + H(+). This chain is Putative serine/threonine-protein kinase R301, found in Acanthamoeba polyphaga (Amoeba).